Here is a 341-residue protein sequence, read N- to C-terminus: MNDLLSGSFKTSVADGSSPPHSHNIEMSKAKVSGGSCHGGNNLDTFFLDVEVVNEDLKELDRLCHNLRSSNEQSKTLHNANAVKELKKKMDADVTAALKTARRLKGNLEALDRANEVNRSLPESGPGSSSDRQRTSVVNGLRKKLKDEMEKFSRVRETITNEYKETVGRMCFTVTGEYPDEATLERLISTGESETFLQKAIQEQGRGRILDTINEIQERHDAVKDIEKSLNELHQVFLDMAVLVEHQGAQLDDIEGNVKRANSLVRSGADRLVKARFYQKNTRKWTCFAILLLLIIVVLIVVFTVKPWESNGGGGGGAPRQATPVQAQPPPPPAVNRRLLR.

The residue at position 1 (M1) is an N-acetylmethionine. 2 disordered regions span residues 1-22 (MNDL…PPHS) and 111-137 (LDRA…RTSV). Over 1 to 284 (MNDLLSGSFK…ARFYQKNTRK (284 aa)) the chain is Cytoplasmic. Polar residues-rich tracts occupy residues 8–21 (SFKT…SPPH) and 126–137 (PGSSSDRQRTSV). The stretch at 64–185 (CHNLRSSNEQ…GEYPDEATLE (122 aa)) forms a coiled coil. The t-SNARE coiled-coil homology domain occupies 213–275 (INEIQERHDA…RSGADRLVKA (63 aa)). Residues 285 to 305 (WTCFAILLLLIIVVLIVVFTV) traverse the membrane as a helical; Anchor for type IV membrane protein segment. Residues 306–341 (KPWESNGGGGGGAPRQATPVQAQPPPPPAVNRRLLR) are Vesicular-facing. The tract at residues 312 to 341 (GGGGGGAPRQATPVQAQPPPPPAVNRRLLR) is disordered.

It belongs to the syntaxin family. As to quaternary structure, part of the t-SNARE complex.

Its subcellular location is the membrane. In terms of biological role, vesicle trafficking protein that functions in the secretory pathway. The chain is Syntaxin-122 (SYP122) from Arabidopsis thaliana (Mouse-ear cress).